The primary structure comprises 2713 residues: Histone-lysine N-methyltransferase 2B (2713 aa).

A compositionally biased stretch (gly residues) spans 1 to 11 (MAAAAGGGSCP). 3 disordered regions span residues 1–65 (MAAA…GEDT), 82–524 (RLWA…PTVV), and 542–783 (VSAR…ARVA). N-acetylalanine is present on alanine 2. Residues 12 to 24 (GPGSARGRFPGRP) show a composition bias toward low complexity. Positions 17-36 (RGRFPGRPRGSGGGGGRGGR) match the Menin-binding motif (MBM) motif. Gly residues-rich tracts occupy residues 25-38 (RGSG…GRGN) and 49-60 (RGGGAAGPGGAE). The a.T hook 1 DNA-binding region spans 37–44 (GNGAERVR). Residues 109-123 (PEEESSDGESEEEEF) show a composition bias toward acidic residues. The a.T hook 2 DNA-binding region spans 110–117 (EEESSDGE). Residues serine 113, serine 114, and serine 118 each carry the phosphoserine modification. Residues 144-158 (QRGRAPRGRGRKHKT) show a composition bias toward basic residues. Residues 340-360 (PQRKDGDEPERGSCRKKQEQK) are compositionally biased toward basic and acidic residues. The a.T hook 3 DNA-binding region spans 357–365 (QEQKLEEEE). The segment covering 361–393 (LEEEEEEEEKEGEEKEEKDDNEDNNKQEEEEET) has biased composition (acidic residues). A compositionally biased stretch (basic and acidic residues) spans 394-412 (ERAVAEEEAMLAKEKEEAK). The segment covering 414 to 460 (PSPPLTPPVPSPPPPLPPPSTSPPPPASPLPPPVSPPPPLSPPPYPA) has biased composition (pro residues). Residues 501 to 517 (GTLSPTPNPSTTTGSPL) show a composition bias toward low complexity. Over residues 555-566 (RFMDEDPPKPPK) the composition is skewed to basic and acidic residues. The segment covering 577–605 (ATSPPAPQEPVPVSSPPRVPTPPSTPVPL) has biased composition (pro residues). Residues 606–617 (PEKRRSILREPT) show a composition bias toward basic and acidic residues. A compositionally biased stretch (pro residues) spans 627–645 (LPPPPPAPPPAPSPPPAPA). 3 stretches are compositionally biased toward low complexity: residues 646 to 657 (TPSRRPLLLRAP), 715 to 728 (VPVV…EVPP), and 738 to 756 (QQLQ…LLPQ). A compositionally biased stretch (pro residues) spans 757 to 774 (ALPPQQPQAQPPPSPQHT). Lysine 810 participates in a covalent cross-link: Glycyl lysine isopeptide (Lys-Gly) (interchain with G-Cter in SUMO2). A phosphoserine mark is found at serine 826, serine 849, and serine 866. Disordered stretches follow at residues 831–872 (TEEA…QGPR) and 899–964 (SALP…HHGK). The segment covering 841 to 862 (TPDRGCVRSEDESMEAKRDRAS) has biased composition (basic and acidic residues). The span at 912–922 (EDTSSASETES) shows a compositional bias: low complexity. Phosphoserine is present on serine 941. Basic residues predominate over residues 953–964 (TPRRSLPSHHGK). Residues 964–1011 (KKMRMARCGHCRGCLRVQDCGSCVNCLDKPKFGGPNTKKQCCVYRKCD) form a CXXC-type zinc finger. Zn(2+) is bound by residues cysteine 971, cysteine 974, cysteine 977, cysteine 983, cysteine 986, cysteine 989, cysteine 1005, and cysteine 1010. Disordered regions lie at residues 1032-1076 (LLPW…DSLL) and 1088-1138 (QRPS…LQPV). Phosphoserine occurs at positions 1037, 1040, 1098, and 1101. A Glycyl lysine isopeptide (Lys-Gly) (interchain with G-Cter in SUMO2) cross-link involves residue lysine 1142. 3 consecutive PHD-type zinc fingers follow at residues 1207–1258 (PMVC…CKFC), 1255–1309 (CKFC…CVRC), and 1341–1402 (GNYC…CAGA). Positions 1410-1510 (ALSGALQGGL…GLLLKLLESA (101 aa)) constitute a Bromo domain. The interval 1550–1572 (RQQESETPESGQPPGDPSAAFQS) is disordered. A C2HC pre-PHD-type zinc finger spans residues 1584 to 1624 (PRQCALCLKYGDADSKEAGRLLYIGQNEWTHVNCAIWSAEV). Residues 1645–1692 (MRCELCLKPGATVGCCLSSCLSNFHFMCARASYCIFQDDKKVFCQKHT) form a PHD-type 4 zinc finger. An FYR N-terminal domain is found at 1733–1789 (VINVLIGSIRINSLGTLSDLSDCEGRLFPIGYQCSRLYWSTVDARRRCWYRCRILEY). Polar residues predominate over residues 1808-1821 (QTIVHSPTPSSDTD). Disordered stretches follow at residues 1808–1973 (QTIV…GPDF), 2056–2104 (QLDG…PPED), 2116–2160 (NLGG…RTFA), 2279–2356 (VSTF…RCPL), and 2382–2408 (YSAG…PKRV). Composition is skewed to low complexity over residues 1872 to 1890 (PLGG…PSSL) and 1923 to 1933 (RRTSSPLRTSP). A phosphoserine mark is found at serine 1926 and serine 1932. Over residues 1939–1950 (LSTSVTALTPTS) the composition is skewed to polar residues. Acidic residues predominate over residues 2058-2068 (DGVDDGTDSEA). 2 positions are modified to phosphothreonine: threonine 2064 and threonine 2079. Over residues 2084–2093 (PGVGRGGVLG) the composition is skewed to gly residues. The segment covering 2140–2153 (NGSQPPQSLSTSPA) has biased composition (polar residues). Residues serine 2286 and serine 2346 each carry the phosphoserine modification. One can recognise an FYR C-terminal domain in the interval 2409–2490 (GPHLRFEISS…QRCQHYKFRY (82 aa)). The short motif at 2506–2511 (GAARAE) is the WDR5 interaction motif (WIN) element. Positions 2573–2689 (EAVGVYRSAI…RGEELTYDYK (117 aa)) constitute an SET domain. Residues histidine 2583, arginine 2585, tyrosine 2627, and 2650–2651 (NH) each bind S-adenosyl-L-methionine. Zn(2+) is bound by residues cysteine 2653 and cysteine 2701. In terms of domain architecture, Post-SET spans 2697 to 2713 (NKLPCNCGAKRCRRFLN). Residue asparagine 2702 coordinates S-adenosyl-L-methionine. The Zn(2+) site is built by cysteine 2703 and cysteine 2708.

The protein belongs to the class V-like SAM-binding methyltransferase superfamily. Histone-lysine methyltransferase family. TRX/MLL subfamily. As to quaternary structure, component of the menin-associated histone methyltransferase complex, at least composed of KMT2B/MLL4, ASH2L, RBBP5, WDR5, DPY30, MEN1; the complex interacts with POLR2A and POLR2B via MEN1. Interacts with NFE2. Interacts with KDM6B. Interacts (via WIN motif) with WDR5. Interacts (via MBM motif) with MEN1.

The protein resides in the nucleus. It carries out the reaction L-lysyl(4)-[histone H3] + S-adenosyl-L-methionine = N(6)-methyl-L-lysyl(4)-[histone H3] + S-adenosyl-L-homocysteine + H(+). The enzyme catalyses N(6)-methyl-L-lysyl(4)-[histone H3] + S-adenosyl-L-methionine = N(6),N(6)-dimethyl-L-lysyl(4)-[histone H3] + S-adenosyl-L-homocysteine + H(+). In terms of biological role, histone methyltransferase that catalyzes methyl group transfer from S-adenosyl-L-methionine to the epsilon-amino group of 'Lys-4' of histone H3 (H3K4) via a non-processive mechanism. Part of chromatin remodeling machinery predominantly forms H3K4me1 and H3K4me2 methylation marks at active chromatin sites where transcription and DNA repair take place. Likely plays a redundant role with KMT2C in enriching H3K4me1 marks on primed and active enhancer elements. Plays a central role in beta-globin locus transcription regulation by being recruited by NFE2. Plays an important role in controlling bulk H3K4me during oocyte growth and preimplantation development. Required during the transcriptionally active period of oocyte growth for the establishment and/or maintenance of bulk H3K4 trimethylation (H3K4me3), global transcriptional silencing that preceeds resumption of meiosis, oocyte survival and normal zygotic genome activation. The sequence is that of Histone-lysine N-methyltransferase 2B (Kmt2b) from Mus musculus (Mouse).